The sequence spans 387 residues: Testis-expressed protein 9 (387 aa).

Disordered regions lie at residues 1–25 and 58–133; these read MAGR…LAAG and REQQ…LKYP. Composition is skewed to polar residues over residues 70-91 and 103-115; these read ALTT…SSEG and KNTG…QNRL. A coiled-coil region spans residues 184 to 347; the sequence is IGTEAQIRFL…ERQKGELMIG (164 aa).

As to expression, testis-specific.

It localises to the cytoplasm. The protein resides in the cytoskeleton. The protein localises to the microtubule organizing center. It is found in the centrosome. Its subcellular location is the centriolar satellite. This Mus musculus (Mouse) protein is Testis-expressed protein 9 (Tex9).